The chain runs to 79 residues: Antimicrobial peptide UyCT1 (79 aa).

The first 23 residues, 1–23 (MKTQLAFLAITVILMQLFAQTEA), serve as a signal peptide directing secretion. Isoleucine 37 is modified (isoleucine amide). The propeptide occupies 41-79 (GLRNVDQIADLFDSGLSDADDLFDSGLSDADAKFMKMFM).

The protein belongs to the non-disulfide-bridged peptide (NDBP) superfamily. Short antimicrobial peptide (group 4) family. In terms of tissue distribution, expressed by the venom gland.

The protein localises to the secreted. It localises to the target cell membrane. Functionally, inhibits the growth of Gram-positive (S.aureus, MIC=15 uM) and Gram-negative bacteria (E.coli, MIC=10 uM and P.aeruginosa, MIC=10 uM). It also shows 26% of hemolysis when 15 uM are tested (81% at 50 uM). In terms of biological role, inhibits the growth of Gram-negative bacteria (E.coli, MIC=25 uM and P.aeruginosa, MIC=40 uM). It also shows 7% of hemolysis when 50 uM are tested. Does not show activity against the Gram-positive bacteria S.aureus. The chain is Antimicrobial peptide UyCT1 from Urodacus yaschenkoi (Inland robust scorpion).